The following is a 264-amino-acid chain: Cell division protein FtsQ (264 aa).

The interval 1-24 is disordered; that stretch reads MAGPTTAERGARQQESSGPPRVRR. Topologically, residues 1-32 are cytoplasmic; the sequence is MAGPTTAERGARQQESSGPPRVRRFRPPRLRT. A helical transmembrane segment spans residues 33 to 53; that stretch reads IIILAVALVLVAGGTVWVLYG. Over 54 to 264 the chain is Extracellular; it reads SNWTRLERVS…VATAPASSGS (211 aa). A POTRA domain is found at 57 to 126; it reads TRLERVSVSG…HGIGLKVTER (70 aa).

The protein belongs to the FtsQ/DivIB family. FtsQ subfamily.

The protein resides in the cell membrane. Essential cell division protein. This is Cell division protein FtsQ from Streptomyces coelicolor (strain ATCC BAA-471 / A3(2) / M145).